The following is a 285-amino-acid chain: Tryptophan synthase alpha chain (285 aa).

Active-site proton acceptor residues include glutamate 53 and aspartate 64.

Belongs to the TrpA family. Tetramer of two alpha and two beta chains.

The enzyme catalyses (1S,2R)-1-C-(indol-3-yl)glycerol 3-phosphate + L-serine = D-glyceraldehyde 3-phosphate + L-tryptophan + H2O. It participates in amino-acid biosynthesis; L-tryptophan biosynthesis; L-tryptophan from chorismate: step 5/5. Its function is as follows. The alpha subunit is responsible for the aldol cleavage of indoleglycerol phosphate to indole and glyceraldehyde 3-phosphate. The chain is Tryptophan synthase alpha chain from Bordetella bronchiseptica (strain ATCC BAA-588 / NCTC 13252 / RB50) (Alcaligenes bronchisepticus).